The primary structure comprises 311 residues: uncharacterized protein (311 aa).

10 helical membrane-spanning segments follow: residues 13-33, 41-61, 76-96, 103-123, 128-148, 157-177, 192-212, 218-238, 248-268, and 272-292; these read STAV…GFFS, FELV…CWLA, LQTL…FKSF, IAIS…SFFY, NVIS…ISGI, LMGS…FTTL, FLQT…GAFA, NWIM…LLFF, FISI…TVFT, and PDLY…LTLV. EamA domains are found at residues 24–147 and 166–292; these read VIFG…LISG and VLAA…LTLV.

Belongs to the EamA transporter family.

The protein resides in the cell membrane. This is an uncharacterized protein from Bacillus subtilis (strain 168).